The chain runs to 172 residues: Translation initiation factor IF-3 (172 aa).

Belongs to the IF-3 family. Monomer.

The protein resides in the cytoplasm. IF-3 binds to the 30S ribosomal subunit and shifts the equilibrium between 70S ribosomes and their 50S and 30S subunits in favor of the free subunits, thus enhancing the availability of 30S subunits on which protein synthesis initiation begins. This Campylobacter concisus (strain 13826) protein is Translation initiation factor IF-3.